We begin with the raw amino-acid sequence, 329 residues long: Holliday junction branch migration complex subunit RuvB (329 aa).

A disordered region spans residues 1-20 (MSRILEGDPVEGEKSWENEL). The segment at 1 to 181 (MSRILEGDPV…FGIVERLQFY (181 aa)) is large ATPase domain (RuvB-L). Over residues 11-20 (EGEKSWENEL) the composition is skewed to basic and acidic residues. Residues Leu20, Arg21, Gly62, Lys65, Thr66, Thr67, 128–130 (EDY), Arg171, Tyr181, and Arg218 contribute to the ATP site. Thr66 is a Mg(2+) binding site. Residues 182–252 (DKDALRQILM…IAVYALNQLG (71 aa)) are small ATPAse domain (RuvB-S). The head domain (RuvB-H) stretch occupies residues 255–329 (QYGLDLMDRR…FAKSSVLADK (75 aa)). 3 residues coordinate DNA: Arg291, Lys310, and Arg315.

This sequence belongs to the RuvB family. As to quaternary structure, homohexamer. Forms an RuvA(8)-RuvB(12)-Holliday junction (HJ) complex. HJ DNA is sandwiched between 2 RuvA tetramers; dsDNA enters through RuvA and exits via RuvB. An RuvB hexamer assembles on each DNA strand where it exits the tetramer. Each RuvB hexamer is contacted by two RuvA subunits (via domain III) on 2 adjacent RuvB subunits; this complex drives branch migration. In the full resolvosome a probable DNA-RuvA(4)-RuvB(12)-RuvC(2) complex forms which resolves the HJ.

The protein resides in the cytoplasm. It carries out the reaction ATP + H2O = ADP + phosphate + H(+). Functionally, the RuvA-RuvB-RuvC complex processes Holliday junction (HJ) DNA during genetic recombination and DNA repair, while the RuvA-RuvB complex plays an important role in the rescue of blocked DNA replication forks via replication fork reversal (RFR). RuvA specifically binds to HJ cruciform DNA, conferring on it an open structure. The RuvB hexamer acts as an ATP-dependent pump, pulling dsDNA into and through the RuvAB complex. RuvB forms 2 homohexamers on either side of HJ DNA bound by 1 or 2 RuvA tetramers; 4 subunits per hexamer contact DNA at a time. Coordinated motions by a converter formed by DNA-disengaged RuvB subunits stimulates ATP hydrolysis and nucleotide exchange. Immobilization of the converter enables RuvB to convert the ATP-contained energy into a lever motion, pulling 2 nucleotides of DNA out of the RuvA tetramer per ATP hydrolyzed, thus driving DNA branch migration. The RuvB motors rotate together with the DNA substrate, which together with the progressing nucleotide cycle form the mechanistic basis for DNA recombination by continuous HJ branch migration. Branch migration allows RuvC to scan DNA until it finds its consensus sequence, where it cleaves and resolves cruciform DNA. This is Holliday junction branch migration complex subunit RuvB from Bdellovibrio bacteriovorus (strain ATCC 15356 / DSM 50701 / NCIMB 9529 / HD100).